A 309-amino-acid chain; its full sequence is Epidermal retinol dehydrogenase 2 (309 aa).

A helical transmembrane segment spans residues 11–31 (LLVFLGKSLLSVLEALLFHVI). 44 to 68 (LITGAGSGLGRLLALQFARLGAVLV) lines the NADP(+) pocket. Ser-177 is a substrate binding site. The active-site Proton acceptor is Tyr-190. Residues 270 to 290 (FLYFIVFLKSILPIKTGILIA) traverse the membrane as a helical segment.

The protein belongs to the short-chain dehydrogenases/reductases (SDR) family.

Its subcellular location is the endoplasmic reticulum membrane. It catalyses the reaction all-trans-retinol--[retinol-binding protein] + NAD(+) = all-trans-retinal--[retinol-binding protein] + NADH + H(+). It functions in the pathway cofactor metabolism; retinol metabolism. Oxidoreductase with strong preference for NAD. Active in both the oxidative and reductive directions. Oxidizes all-trans-retinol in all-trans-retinaldehyde. No activity was detected with 11-cis-retinol or 11-cis-retinaldehyde as substrates with either NAD(+)/NADH or NADP(+)/NADPH. In Mus musculus (Mouse), this protein is Epidermal retinol dehydrogenase 2.